Reading from the N-terminus, the 348-residue chain is MPGKQSEEGPAEAGASEDSEEEGLGGLTLEELQQGQEAARALEDMMTLSAQTLVRAEVDELYEEVRPLGQGCYGRVLLVTHRQKGTPLALKQLPKPRTSLRGFLYEFCVGLSLGAHSAIVTAYGIGIESAHSYSFLTEPVLHGDLMAFIQPKVGLPQPAVHRCAAQLASALEYIHARGLVYRDLKPENVLVCDPACRRFKLTDFGHTRPRGTLLRLAGPPIPYTAPELCAPPPLPEGLPIQPALDAWALGVLLFCLLTGYFPWDRPLAEADPFYEDFLIWQASGQPRDRPQPWFGLAAAADALLRGLLDPHPRRRSAVIAIREHLGRPWRQREGEAEAVGAVEEEAGQ.

A disordered region spans residues 1–25 (MPGKQSEEGPAEAGASEDSEEEGLG). One can recognise a Protein kinase domain in the interval 62 to 330 (YEEVRPLGQG…IREHLGRPWR (269 aa)). Residues 68–76 (LGQGCYGRV) and K91 each bind ATP. The active-site Proton acceptor is the D183.

It belongs to the protein kinase superfamily. Ser/Thr protein kinase family. STKL subfamily.

It catalyses the reaction L-seryl-[protein] + ATP = O-phospho-L-seryl-[protein] + ADP + H(+). The catalysed reaction is L-threonyl-[protein] + ATP = O-phospho-L-threonyl-[protein] + ADP + H(+). This chain is Serine/threonine-protein kinase SBK2 (SBK2), found in Homo sapiens (Human).